The sequence spans 125 residues: Histone H2A (125 aa).

The segment covering methionine 1 to serine 18 has biased composition (basic residues). Residues methionine 1–alanine 21 form a disordered region. Serine 2 bears the N-acetylserine mark. Glutamine 104 bears the N5-methylglutamine mark.

This sequence belongs to the histone H2A family. In terms of assembly, the nucleosome is a histone octamer containing two molecules each of H2A, H2B, H3 and H4 assembled in one H3-H4 heterotetramer and two H2A-H2B heterodimers. The octamer wraps approximately 147 bp of DNA.

It is found in the nucleus. The protein localises to the chromosome. Core component of nucleosome. Nucleosomes wrap and compact DNA into chromatin, limiting DNA accessibility to the cellular machineries which require DNA as a template. Histones thereby play a central role in transcription regulation, DNA repair, DNA replication and chromosomal stability. DNA accessibility is regulated via a complex set of post-translational modifications of histones, also called histone code, and nucleosome remodeling. This is Histone H2A from Mytilus trossulus (Blue mussel).